Here is a 301-residue protein sequence, read N- to C-terminus: UDP-N-acetylenolpyruvoylglucosamine reductase 1 (301 aa).

An FAD-binding PCMH-type domain is found at 29 to 196 (KIGGPADILI…LEAEFQLQIG (168 aa)). Arginine 174 is a catalytic residue. The active-site Proton donor is serine 225. The active site involves glutamate 295.

The protein belongs to the MurB family. The cofactor is FAD.

It localises to the cytoplasm. The enzyme catalyses UDP-N-acetyl-alpha-D-muramate + NADP(+) = UDP-N-acetyl-3-O-(1-carboxyvinyl)-alpha-D-glucosamine + NADPH + H(+). Its pathway is cell wall biogenesis; peptidoglycan biosynthesis. In terms of biological role, cell wall formation. The sequence is that of UDP-N-acetylenolpyruvoylglucosamine reductase 1 from Bacillus thuringiensis subsp. konkukian (strain 97-27).